Here is a 353-residue protein sequence, read N- to C-terminus: Methylthioribose-1-phosphate isomerase (353 aa).

Residues 48 to 50, R94, and Q201 each bind substrate; that span reads RGA. D242 acts as the Proton donor in catalysis. 252–253 lines the substrate pocket; it reads NK.

The protein belongs to the eIF-2B alpha/beta/delta subunits family. MtnA subfamily.

The enzyme catalyses 5-(methylsulfanyl)-alpha-D-ribose 1-phosphate = 5-(methylsulfanyl)-D-ribulose 1-phosphate. It functions in the pathway amino-acid biosynthesis; L-methionine biosynthesis via salvage pathway; L-methionine from S-methyl-5-thio-alpha-D-ribose 1-phosphate: step 1/6. In terms of biological role, catalyzes the interconversion of methylthioribose-1-phosphate (MTR-1-P) into methylthioribulose-1-phosphate (MTRu-1-P). The chain is Methylthioribose-1-phosphate isomerase from Roseiflexus sp. (strain RS-1).